We begin with the raw amino-acid sequence, 527 residues long: Peptide chain release factor 3 (527 aa).

In terms of domain architecture, tr-type G spans 10–278 (DKRRTFAIIS…AFIEYAPAPL (269 aa)). Residues 19–26 (SHPDAGKT), 87–91 (DTPGH), and 141–144 (NKLD) contribute to the GTP site.

The protein belongs to the TRAFAC class translation factor GTPase superfamily. Classic translation factor GTPase family. PrfC subfamily.

It is found in the cytoplasm. Its function is as follows. Increases the formation of ribosomal termination complexes and stimulates activities of RF-1 and RF-2. It binds guanine nucleotides and has strong preference for UGA stop codons. It may interact directly with the ribosome. The stimulation of RF-1 and RF-2 is significantly reduced by GTP and GDP, but not by GMP. The polypeptide is Peptide chain release factor 3 (Pelobacter propionicus (strain DSM 2379 / NBRC 103807 / OttBd1)).